The sequence spans 254 residues: Agamous-like MADS-box protein AGL9 homolog (254 aa).

The region spanning 3 to 57 is the MADS-box domain; sequence RGRVELKRIENKINRQVTFAKRRNGLLKKAYELSVLCDAEVALIIFSNRGKLYEF. The K-box domain occupies 91–181; it reads ELSSQQEYLK…RLRLADGYQM (91 aa).

The protein localises to the nucleus. Functionally, probable transcription factor active in inflorescence development and floral organogenesis. The chain is Agamous-like MADS-box protein AGL9 homolog (AGL9) from Sinapis alba (White mustard).